We begin with the raw amino-acid sequence, 144 residues long: Large ribosomal subunit protein uL13 (144 aa).

The protein belongs to the universal ribosomal protein uL13 family. As to quaternary structure, part of the 50S ribosomal subunit.

Functionally, this protein is one of the early assembly proteins of the 50S ribosomal subunit, although it is not seen to bind rRNA by itself. It is important during the early stages of 50S assembly. The protein is Large ribosomal subunit protein uL13 of Clostridium acetobutylicum (strain ATCC 824 / DSM 792 / JCM 1419 / IAM 19013 / LMG 5710 / NBRC 13948 / NRRL B-527 / VKM B-1787 / 2291 / W).